The primary structure comprises 485 residues: Taxane 13-alpha-hydroxylase (485 aa).

Cys431 serves as a coordination point for heme.

The protein belongs to the cytochrome P450 family. The cofactor is heme.

It carries out the reaction taxa-4(20),11-dien-5alpha-ol + reduced [NADPH--hemoprotein reductase] + O2 = taxa-4(20),11-dien-5alpha,13alpha-diol + oxidized [NADPH--hemoprotein reductase] + H2O + H(+). It functions in the pathway alkaloid biosynthesis; taxol biosynthesis. In terms of biological role, involved in the transformation of a taxadienyl acetate by hydroxylation at C13 to yield taxadien-5-alpha-acetoxy-13-alpha-ol. The chain is Taxane 13-alpha-hydroxylase (CYP725A2) from Taxus cuspidata (Japanese yew).